We begin with the raw amino-acid sequence, 309 residues long: tRNA hydroxylation protein P2 (309 aa).

This sequence belongs to the peptidase U32 family.

Functionally, involved in prephenate-dependent formation of 5-hydroxyuridine (ho5U) modification at position 34 in tRNAs, the first step in 5-methoxyuridine (mo5U) biosynthesis. The sequence is that of tRNA hydroxylation protein P2 from Bacillus subtilis (strain 168).